The chain runs to 369 residues: Hsc70-interacting protein (369 aa).

Residues 38–97 form a disordered region; it reads MGGKVPPATQKAKSEENTKEEKPDSKKVEEDLKADEPSSEESDLEIDKEGVIEPDTDAPQ. The segment covering 49 to 73 has biased composition (basic and acidic residues); it reads AKSEENTKEEKPDSKKVEEDLKADE. TPR repeat units follow at residues 114–147, 148–181, and 182–215; these read ANDK…NPRL, AILY…NPDS, and AQPY…DYDE. A compositionally biased stretch (basic and acidic residues) spans 256-272; it reads KAREEHERAQREEEARR. The segment at 256 to 300 is disordered; the sequence is KAREEHERAQREEEARRQSGAQYGSFPGGFPGGMPGNFPGGMPGM. The span at 281-300 shows a compositional bias: gly residues; the sequence is FPGGFPGGMPGNFPGGMPGM. Positions 319-358 constitute an STI1 domain; sequence DPEVLAAMQDPEVMVAFQDVAQNPANMSKYQSNPKVMNLI. Ser-346 is modified (phosphoserine; by GRK5). Lys-353 and Lys-360 each carry N6-acetyllysine.

The protein belongs to the FAM10 family. In terms of assembly, homotetramer. Interacts with HSC70 as well as DNAJ homologs and HSP90. Interacts (via the C-terminus 303- 319 AA) with GRK5.

The protein localises to the cytoplasm. One HIP oligomer binds the ATPase domains of at least two HSC70 molecules dependent on activation of the HSC70 ATPase by HSP40. Stabilizes the ADP state of HSC70 that has a high affinity for substrate protein. Through its own chaperone activity, it may contribute to the interaction of HSC70 with various target proteins. This chain is Hsc70-interacting protein (ST13), found in Homo sapiens (Human).